Here is a 489-residue protein sequence, read N- to C-terminus: Serine/arginine-rich splicing factor 4 (489 aa).

The RRM 1 domain occupies 2–72 (PRVYIGRLSY…ERVIVEHARG (71 aa)). Disordered regions lie at residues 72 to 95 (GPRR…GRDK) and 169 to 489 (KIRL…HSRS). Phosphoserine occurs at positions 78 and 84. An RRM 2 domain is found at 104–177 (YRLIVENLSS…RKIRLVEDKP (74 aa)). Composition is skewed to basic residues over residues 179–206 (SRRR…KSRS) and 214–246 (SHSK…KKEK). Over residues 247-279 (SRSPSKDNKSRSRSRSPDKSRSKSKDHAEDKLQ) the composition is skewed to basic and acidic residues. 3 positions are modified to phosphoserine: S289, S291, and S293. The segment covering 293-332 (SRHDSKSRSRSQERRAEEERRRSVSRARSQEKSRSQEKSL) has biased composition (basic and acidic residues). Over residues 333–356 (LKSRSRSRSRSRSRSKDKRKGRKR) the composition is skewed to basic residues. 2 stretches are compositionally biased toward basic and acidic residues: residues 357–370 (SRDE…SKSE) and 394–426 (KDTD…RAEG). S441, S453, and S455 each carry phosphoserine. 2 stretches are compositionally biased toward basic residues: residues 456-469 (RSKS…RSKS) and 479-489 (SRSRSRSHSRS).

The protein belongs to the splicing factor SR family. In terms of assembly, found in a pre-mRNA splicing complex with SRSF4/SFRS4, SRSF5/SFRS5, SNRNP70, SNRPA1, SRRM1 and SRRM2. Interacts with PNN. Post-translationally, extensively phosphorylated on serine residues in the RS domain.

The protein resides in the nucleus speckle. In terms of biological role, plays a role in alternative splice site selection during pre-mRNA splicing. Represses the splicing of MAPT/Tau exon 10. This chain is Serine/arginine-rich splicing factor 4 (Srsf4), found in Mus musculus (Mouse).